The primary structure comprises 306 residues: 5'-hydroxyaverantin dehydrogenase (306 aa).

The NADP(+) site is built by Ser-25, Ile-27, Gln-48, Lys-52, and Asp-73. Ser-173 serves as the catalytic Proton donor. Residues Tyr-187, Lys-191, Val-220, and Thr-222 each contribute to the NADP(+) site. Tyr-187 serves as the catalytic Proton acceptor. Residue Lys-191 is the Lowers pKa of active site Tyr of the active site.

The protein belongs to the short-chain dehydrogenases/reductases (SDR) family. Homodimer.

The protein localises to the cytoplasm. Its subcellular location is the cytosol. It catalyses the reaction (1'S,5'S)-5'-hydroxyaverantin + NAD(+) = (S)-5'-oxoaverantin + NADH + H(+). The catalysed reaction is (1'S,5'R)-5'-hydroxyaverantin + NAD(+) = (S)-5'-oxoaverantin + NADH + 2 H(+). It functions in the pathway mycotoxin biosynthesis. Its function is as follows. 5'-hydroxyaverantin dehydrogenase; part of the fragmented gene cluster that mediates the biosynthesis of dothistromin (DOTH), a polyketide toxin very similar in structure to the aflatoxin precursor, versicolorin B. The first step of the pathway is the conversion of acetate to norsolorinic acid (NOR) and requires the fatty acid synthase subunits hexA and hexB, as well as the polyketide synthase pksA. PksA combines a hexanoyl starter unit and 7 malonyl-CoA extender units to synthesize the precursor NOR. The hexanoyl starter unit is provided to the acyl-carrier protein (ACP) domain by the fungal fatty acid synthase hexA/hexB. The second step is the conversion of NOR to averantin (AVN) and requires the norsolorinic acid ketoreductase nor1, which catalyzes the dehydration of norsolorinic acid to form (1'S)-averantin. The cytochrome P450 monooxygenase avnA then catalyzes the hydroxylation of AVN to 5'hydroxyaverantin (HAVN). The next step is performed by adhA that transforms HAVN to averufin (AVF). Averufin might then be converted to hydroxyversicolorone by cypX and avfA. Hydroxyversicolorone is further converted versiconal hemiacetal acetate (VHA) by moxY. VHA is then the substrate for the versiconal hemiacetal acetate esterase est1 to yield versiconal (VAL). Versicolorin B synthase vbsA then converts VAL to versicolorin B (VERB) by closing the bisfuran ring. Then, the activity of the versicolorin B desaturase verB leads to versicolorin A (VERA). DotB, a predicted chloroperoxidase, may perform epoxidation of the A-ring of VERA. Alternatively, a cytochrome P450, such as cypX or avnA could catalyze this step. It is also possible that another, uncharacterized, cytochrome P450 enzyme is responsible for this step. Opening of the epoxide could potentially be achieved by the epoxide hydrolase epoA. However, epoA seems not to be required for DOTH biosynthesis, but other epoxide hydrolases may have the ability to complement this hydrolysis. Alternatively, opening of the epoxide ring could be achieved non-enzymatically. The next step is the deoxygenation of ring A to yield the 5,8-dihydroxyanthraquinone which is most likely catalyzed by the NADPH dehydrogenase encoded by ver1. The last stages of DOTH biosynthesis are proposed to involve hydroxylation of the bisfuran. OrdB and norB might have oxidative roles here. An alternative possibility is that cytochrome P450 monoogenases such as avnA and cypX might perform these steps in addition to previously proposed steps. The polypeptide is 5'-hydroxyaverantin dehydrogenase (Dothistroma septosporum (strain NZE10 / CBS 128990) (Red band needle blight fungus)).